A 162-amino-acid chain; its full sequence is Ribosome maturation factor RimP (162 aa).

It belongs to the RimP family.

Its subcellular location is the cytoplasm. Its function is as follows. Required for maturation of 30S ribosomal subunits. In Leptospira interrogans serogroup Icterohaemorrhagiae serovar copenhageni (strain Fiocruz L1-130), this protein is Ribosome maturation factor RimP.